A 543-amino-acid polypeptide reads, in one-letter code: MARYIFITGGVVSSLGKGLASAALGALLQARGYKVRLRKLDPYLNLDPGTMSPYQHGEVFVTDDGAETDLDLGHYERFTGRPATRQDNITTGRIYQDILTKERRGDYLGATIQVVPHVTNAIKDFIVDSNDGYDFVLVEIGGTVGDIEGLPFFEAIRQIKNDLPRGDVIYIHLTLLPYIPSAGELKTKPTQHSVKELRSIGIQPDILLCRTDRPIPKEERRKLGLFCNVRESAVIEARDADSIYAVPEAYHAAGLDDEVLAAFAIAAEQPPALERWHQINERIRNPEGAVTIAIVGKYTGMKDAYKSLIEALSHGGIANKVQVKLDWIESEVFENEDPAPFLEHVNGILVPGGFGQRGAEGKIKAAQFARERDVPYFGICFGMQMAVIEAARNLAGIEQANSTEFGPTAEPLVGLMTEWLRGNELERRSNAGDLGGTMRLGAYPAALKRGSRVSKIYGDVLEISERHRHRYEVNTAYKDRLEQHGLRFSGMSPDGVLPEIVEYEDHPWFIGVQFHPELKSRPFEPHPLFSSFIEAALVRSRLV.

The interval 1–265 (MARYIFITGG…DDEVLAAFAI (265 aa)) is amidoligase domain. Ser-13 contacts CTP. UTP is bound at residue Ser-13. Residue 14 to 19 (SLGKGL) participates in ATP binding. Tyr-54 contributes to the L-glutamine binding site. Residue Asp-71 participates in ATP binding. Mg(2+) is bound by residues Asp-71 and Glu-139. Residues 146 to 148 (DIE), 186 to 191 (KTKPTQ), and Lys-222 each bind CTP. Residues 186 to 191 (KTKPTQ) and Lys-222 contribute to the UTP site. ATP is bound at residue 238–240 (RDA). The Glutamine amidotransferase type-1 domain maps to 291 to 542 (TIAIVGKYTG…IEAALVRSRL (252 aa)). Gly-353 is an L-glutamine binding site. Cys-380 serves as the catalytic Nucleophile; for glutamine hydrolysis. L-glutamine-binding positions include 381–384 (FGMQ), Glu-404, and Arg-470. Active-site residues include His-515 and Glu-517.

The protein belongs to the CTP synthase family. In terms of assembly, homotetramer.

It catalyses the reaction UTP + L-glutamine + ATP + H2O = CTP + L-glutamate + ADP + phosphate + 2 H(+). It carries out the reaction L-glutamine + H2O = L-glutamate + NH4(+). The enzyme catalyses UTP + NH4(+) + ATP = CTP + ADP + phosphate + 2 H(+). The protein operates within pyrimidine metabolism; CTP biosynthesis via de novo pathway; CTP from UDP: step 2/2. Its activity is regulated as follows. Allosterically activated by GTP, when glutamine is the substrate; GTP has no effect on the reaction when ammonia is the substrate. The allosteric effector GTP functions by stabilizing the protein conformation that binds the tetrahedral intermediate(s) formed during glutamine hydrolysis. Inhibited by the product CTP, via allosteric rather than competitive inhibition. Catalyzes the ATP-dependent amination of UTP to CTP with either L-glutamine or ammonia as the source of nitrogen. Regulates intracellular CTP levels through interactions with the four ribonucleotide triphosphates. The sequence is that of CTP synthase from Rhodopseudomonas palustris (strain HaA2).